An 81-amino-acid chain; its full sequence is Small hydrophobic protein (81 aa).

The Intravirion portion of the chain corresponds to 1 to 19 (MNSTSTIIEFTGEFWTYFT). A helical; Signal-anchor for type II membrane protein transmembrane segment spans residues 20 to 40 (LVFMMLTIGFFFIVTSLVAAI). The Virion surface portion of the chain corresponds to 41–81 (LNKLCDLNDHHTNSLDIRTKLRSDTQLITRAHEESINQSSN). N-linked (GlcNAc...) asparagine; by host glycosylation occurs at N77.

This sequence belongs to the orthopneumovirus small hydrophobic protein family. In terms of assembly, homopentamer forming a funnel-like pore. Interacts with glycoprotein G; this interaction occurs on the surface of virion particles and infected cells. Interacts with host BCAP31 (via C-terminus); this interaction is direct. Post-translationally, four species of SH have been detected in infected cell cytoplasm: a 7.5 kDa non-glycosylated form (SH0), a 13-15 kDa form that contains one or two N-linked carbohydrate side chains of the high-mannose type (SHg), a 21-30 kDa polylactosaminoglycan-modified form of the protein (SHp), and the isoform generated by alternative translational initiation. Of these different forms, SH0 is by far the most abundant protein detected during virus infection. In terms of processing, tyrosine phosphorylated.

The protein resides in the virion membrane. The protein localises to the host cell membrane. Its subcellular location is the host Golgi apparatus membrane. It is found in the host endoplasmic reticulum membrane. Its activity is regulated as follows. Channel activity is inhibited by copper. Also inhibited by small-molecule pyronin B. Viroporin that forms a homopentameric ion channel displaying low ion selectivity. May play a role in virus morphogenesis and pathogenicity at various stages of the viral life cycle. Accumulates at the membrane of the Golgi apparatus in infected cells and may facilitate virus release by modifying the secretory pathway. May enhance host membrane permeability and disrupt cellular ion homeostasis, which can be sensed as damage-associated molecular patterns/danger signals, triggering NLRP3 inflammasome activation and inflammatory immune response. Also inhibits host TNFA-mediated signaling pathway and may delay apoptosis, allowing time for the virus to replicate. The chain is Small hydrophobic protein (SH) from Bos taurus (Bovine).